Consider the following 220-residue polypeptide: Probable cutinase 5 (220 aa).

The signal sequence occupies residues 1–18; it reads MVALHTLLLTAFAAVSLA. 2 disulfides stabilise this stretch: Cys-42-Cys-121 and Cys-68-Cys-82. The active-site Nucleophile is the Ser-132. Cys-183 and Cys-190 are oxidised to a cystine. Residue Asp-187 is part of the active site. The active-site Proton donor/acceptor is His-200.

It belongs to the cutinase family.

It localises to the secreted. The catalysed reaction is cutin + H2O = cutin monomers.. In terms of biological role, catalyzes the hydrolysis of complex carboxylic polyesters found in the cell wall of plants. Degrades cutin, a macromolecule that forms the structure of the plant cuticle. The protein is Probable cutinase 5 of Aspergillus terreus (strain NIH 2624 / FGSC A1156).